The sequence spans 247 residues: 5-oxoprolinase subunit A (247 aa).

Belongs to the LamB/PxpA family. In terms of assembly, forms a complex composed of PxpA, PxpB and PxpC.

It catalyses the reaction 5-oxo-L-proline + ATP + 2 H2O = L-glutamate + ADP + phosphate + H(+). Catalyzes the cleavage of 5-oxoproline to form L-glutamate coupled to the hydrolysis of ATP to ADP and inorganic phosphate. In Vibrio vulnificus (strain YJ016), this protein is 5-oxoprolinase subunit A.